Consider the following 476-residue polypeptide: 3-isopropylmalate dehydratase large subunit (476 aa).

Residues cysteine 353, cysteine 413, and cysteine 416 each coordinate [4Fe-4S] cluster.

The protein belongs to the aconitase/IPM isomerase family. LeuC type 1 subfamily. Heterodimer of LeuC and LeuD. [4Fe-4S] cluster serves as cofactor.

It catalyses the reaction (2R,3S)-3-isopropylmalate = (2S)-2-isopropylmalate. It functions in the pathway amino-acid biosynthesis; L-leucine biosynthesis; L-leucine from 3-methyl-2-oxobutanoate: step 2/4. Its function is as follows. Catalyzes the isomerization between 2-isopropylmalate and 3-isopropylmalate, via the formation of 2-isopropylmaleate. The chain is 3-isopropylmalate dehydratase large subunit from Yersinia pseudotuberculosis serotype O:1b (strain IP 31758).